The sequence spans 398 residues: tRNA pseudouridine synthase D (398 aa).

The Nucleophile role is filled by D76. Residues 151–361 (GVPNRFGVQR…MEGERRPLRV (211 aa)) enclose the TRUD domain.

Belongs to the pseudouridine synthase TruD family.

It catalyses the reaction uridine(13) in tRNA = pseudouridine(13) in tRNA. Responsible for synthesis of pseudouridine from uracil-13 in transfer RNAs. The protein is tRNA pseudouridine synthase D of Geobacter sp. (strain M21).